The following is a 156-amino-acid chain: Small ribosomal subunit protein uS7 (156 aa).

It belongs to the universal ribosomal protein uS7 family. As to quaternary structure, part of the 30S ribosomal subunit. Contacts proteins S9 and S11.

Functionally, one of the primary rRNA binding proteins, it binds directly to 16S rRNA where it nucleates assembly of the head domain of the 30S subunit. Is located at the subunit interface close to the decoding center, probably blocks exit of the E-site tRNA. This is Small ribosomal subunit protein uS7 from Methylococcus capsulatus (strain ATCC 33009 / NCIMB 11132 / Bath).